The primary structure comprises 225 residues: Phosphoribosylformylglycinamidine synthase subunit PurQ (225 aa).

The region spanning Arg5–Gly225 is the Glutamine amidotransferase type-1 domain. The active-site Nucleophile is Cys89. Residues His198 and Glu200 contribute to the active site.

In terms of assembly, part of the FGAM synthase complex composed of 1 PurL, 1 PurQ and 2 PurS subunits.

The protein localises to the cytoplasm. It carries out the reaction N(2)-formyl-N(1)-(5-phospho-beta-D-ribosyl)glycinamide + L-glutamine + ATP + H2O = 2-formamido-N(1)-(5-O-phospho-beta-D-ribosyl)acetamidine + L-glutamate + ADP + phosphate + H(+). It catalyses the reaction L-glutamine + H2O = L-glutamate + NH4(+). Its pathway is purine metabolism; IMP biosynthesis via de novo pathway; 5-amino-1-(5-phospho-D-ribosyl)imidazole from N(2)-formyl-N(1)-(5-phospho-D-ribosyl)glycinamide: step 1/2. Functionally, part of the phosphoribosylformylglycinamidine synthase complex involved in the purines biosynthetic pathway. Catalyzes the ATP-dependent conversion of formylglycinamide ribonucleotide (FGAR) and glutamine to yield formylglycinamidine ribonucleotide (FGAM) and glutamate. The FGAM synthase complex is composed of three subunits. PurQ produces an ammonia molecule by converting glutamine to glutamate. PurL transfers the ammonia molecule to FGAR to form FGAM in an ATP-dependent manner. PurS interacts with PurQ and PurL and is thought to assist in the transfer of the ammonia molecule from PurQ to PurL. The sequence is that of Phosphoribosylformylglycinamidine synthase subunit PurQ from Synechococcus sp. (strain JA-3-3Ab) (Cyanobacteria bacterium Yellowstone A-Prime).